We begin with the raw amino-acid sequence, 104 residues long: Large ribosomal subunit protein bL21 (104 aa).

The segment covering glutamine 81 to arginine 90 has biased composition (basic residues). Positions glutamine 81–glycine 104 are disordered.

The protein belongs to the bacterial ribosomal protein bL21 family. In terms of assembly, part of the 50S ribosomal subunit. Contacts protein L20.

This protein binds to 23S rRNA in the presence of protein L20. The polypeptide is Large ribosomal subunit protein bL21 (Halorhodospira halophila (strain DSM 244 / SL1) (Ectothiorhodospira halophila (strain DSM 244 / SL1))).